Consider the following 121-residue polypeptide: Small ribosomal subunit protein uS13 (121 aa).

The tract at residues 89–121 (MRHRRGLPVRGQNTKNNARTRKGKKVSIAGKKK) is disordered. The span at 106 to 121 (ARTRKGKKVSIAGKKK) shows a compositional bias: basic residues.

The protein belongs to the universal ribosomal protein uS13 family. As to quaternary structure, part of the 30S ribosomal subunit. Forms a loose heterodimer with protein S19. Forms two bridges to the 50S subunit in the 70S ribosome.

In terms of biological role, located at the top of the head of the 30S subunit, it contacts several helices of the 16S rRNA. In the 70S ribosome it contacts the 23S rRNA (bridge B1a) and protein L5 of the 50S subunit (bridge B1b), connecting the 2 subunits; these bridges are implicated in subunit movement. Contacts the tRNAs in the A and P-sites. This is Small ribosomal subunit protein uS13 from Latilactobacillus sakei subsp. sakei (strain 23K) (Lactobacillus sakei subsp. sakei).